The primary structure comprises 402 residues: Tryptophan synthase beta chain (402 aa).

K91 carries the post-translational modification N6-(pyridoxal phosphate)lysine.

This sequence belongs to the TrpB family. As to quaternary structure, tetramer of two alpha and two beta chains. Pyridoxal 5'-phosphate serves as cofactor.

The enzyme catalyses (1S,2R)-1-C-(indol-3-yl)glycerol 3-phosphate + L-serine = D-glyceraldehyde 3-phosphate + L-tryptophan + H2O. It participates in amino-acid biosynthesis; L-tryptophan biosynthesis; L-tryptophan from chorismate: step 5/5. Functionally, the beta subunit is responsible for the synthesis of L-tryptophan from indole and L-serine. The polypeptide is Tryptophan synthase beta chain (trpB) (Lactococcus lactis subsp. lactis (strain IL1403) (Streptococcus lactis)).